We begin with the raw amino-acid sequence, 206 residues long: Small ribosomal subunit protein uS4A (206 aa).

The S4 RNA-binding domain maps to 98–164; the sequence is MRLDNVVYRL…EKFKTFAENP (67 aa).

Belongs to the universal ribosomal protein uS4 family. In terms of assembly, part of the 30S ribosomal subunit. Contacts protein S5. The interaction surface between S4 and S5 is involved in control of translational fidelity.

One of the primary rRNA binding proteins, it binds directly to 16S rRNA where it nucleates assembly of the body of the 30S subunit. Its function is as follows. With S5 and S12 plays an important role in translational accuracy. The protein is Small ribosomal subunit protein uS4A of Clostridium botulinum (strain ATCC 19397 / Type A).